The sequence spans 629 residues: MWNVDVTCIGGIRSGEATLRPGPNIVQASNFQGKSSFLAAIQTAIGTTGLLTEDHPLMENEDDGKVTLETDEETYTVSLTRATDSDEPAISRSGTPYLTRDQDQIAARLFAVLGEDNPIRAAVREENQERLTELLKKPLETENIDLRIEPLQREIKELEDEVAAAEAASADLPAAQQKVTRLQGELRDLNETRDELERKVDEETDQRALRDELTAKQSDLEREEARLERLENQVDRRKAQLDDKEAALESLDIPDSPTAEADIAEKQTRIDELAVKIDLLDDLHRSTKAIIDEGEIDLITDVERTLSGDTFSCFVCGAETTAEAVTERLNEISDRQESLREQRATLTEEVTQMQQRTREIESKRQQKAELEDEIKRLRVDIQEDQHEVRSIEATIEELQAEIEQREAEYEAAEKAGESHSAELKTIQQKIGSTETKLDRAQAELERIEAELQKRNDRQEQLETKRDELETLRQRRKQKYNELVNQFDAAMADIIGRFAPGFDGAYLDQKTDANDTVGFEINLARDGHTTDLDTLSEGERELVGIVTALAGYRTFSVGDRVPCILLDGIGQLAAEHIRHMIEYLENTAEILVTTAYPEAGSFDGETVSPEHWDVISHETAQSRDHPQITN.

Coiled-coil stretches lie at residues 139–282 (LETE…LLDD) and 318–487 (AETT…NQFD).

Belongs to the Sph1/Sph2 family.

It is found in the cytoplasm. May play a role in a late step of replication. The polypeptide is Smc-like protein Sph1 (sph1) (Halobacterium salinarum (Halobacterium halobium)).